Here is an 826-residue protein sequence, read N- to C-terminus: Outer membrane usher protein YehB (826 aa).

The first 22 residues, 1 to 22, serve as a signal peptide directing secretion; the sequence is MLRMTPLASAIVALLLGIEAYA. C809 and C825 are joined by a disulfide.

It belongs to the fimbrial export usher family.

It localises to the cell outer membrane. Its function is as follows. Part of the yehABCD fimbrial operon. Could contribute to adhesion to various surfaces in specific environmental niches. Probably involved in the export and assembly of fimbrial subunits across the outer membrane. The polypeptide is Outer membrane usher protein YehB (yehB) (Escherichia coli (strain K12)).